The following is a 186-amino-acid chain: Nucleoside diphosphate kinase 6 (186 aa).

ATP contacts are provided by Lys-19, Phe-68, Arg-96, Thr-102, Arg-116, and Asn-126. His-129 (pros-phosphohistidine intermediate) is an active-site residue.

Belongs to the NDK family. Requires Mg(2+) as cofactor. Expressed at a moderately low level in many tissues. Most abundant in kidney, prostate, ovary, intestine, and spleen.

The catalysed reaction is a 2'-deoxyribonucleoside 5'-diphosphate + ATP = a 2'-deoxyribonucleoside 5'-triphosphate + ADP. The enzyme catalyses a ribonucleoside 5'-diphosphate + ATP = a ribonucleoside 5'-triphosphate + ADP. Major role in the synthesis of nucleoside triphosphates other than ATP. The ATP gamma phosphate is transferred to the NDP beta phosphate via a ping-pong mechanism, using a phosphorylated active-site intermediate. Inhibitor of p53-induced apoptosis. The polypeptide is Nucleoside diphosphate kinase 6 (NME6) (Homo sapiens (Human)).